The sequence spans 263 residues: MTRIDDTFRRLRAEGKKAFVAYIMAGDPDLETSLEVMKGLPGAGVDIIELGMPFTDPMADGPTIQTAGQRALEGGQTLARTLAMVREFRRGDASTPIVMMGYYNPIHARGVDRFLAEAQEAGIDGLIVVDLPPEEDAELCLPAQAAGLNFIRLATPTTDDRRLPKVLQNTSGFVYYVSITGITGAAAAQAVDVAPEVARLKAATDLPVIVGFGITSPEAARDIAGVADGCVVGSAIVKLVAEGRPVAEVLDRVAALAAGAHAA.

Active-site proton acceptor residues include E49 and D60.

Belongs to the TrpA family. In terms of assembly, tetramer of two alpha and two beta chains.

The enzyme catalyses (1S,2R)-1-C-(indol-3-yl)glycerol 3-phosphate + L-serine = D-glyceraldehyde 3-phosphate + L-tryptophan + H2O. It functions in the pathway amino-acid biosynthesis; L-tryptophan biosynthesis; L-tryptophan from chorismate: step 5/5. Functionally, the alpha subunit is responsible for the aldol cleavage of indoleglycerol phosphate to indole and glyceraldehyde 3-phosphate. The polypeptide is Tryptophan synthase alpha chain (Cereibacter sphaeroides (strain ATCC 17025 / ATH 2.4.3) (Rhodobacter sphaeroides)).